Consider the following 553-residue polypeptide: Carboxypeptidase Y homolog A (553 aa).

An N-terminal signal peptide occupies residues 1-17; it reads MRVLSTTLLIGAAAAAV. Residues 18 to 134 constitute a propeptide that is removed on maturation; sequence SPPQQVLQAP…RLEAFDLRVK (117 aa). Intrachain disulfides connect Cys189-Cys428, Cys323-Cys337, Cys347-Cys370, Cys354-Cys363, and Cys392-Cys398. Asn220 carries N-linked (GlcNAc...) asparagine glycosylation. Ser276 is an active-site residue. Residue Asp467 is part of the active site. N-linked (GlcNAc...) asparagine glycosylation is present at Asn518. The active site involves His529.

The protein belongs to the peptidase S10 family.

Its subcellular location is the vacuole. The catalysed reaction is Release of a C-terminal amino acid with broad specificity.. Its function is as follows. Vacuolar carboxypeptidase involved in degradation of small peptides. Digests preferentially peptides containing an aliphatic or hydrophobic residue in P1' position, as well as methionine, leucine or phenylalanine in P1 position of ester substrate. The sequence is that of Carboxypeptidase Y homolog A (cpyA) from Talaromyces stipitatus (strain ATCC 10500 / CBS 375.48 / QM 6759 / NRRL 1006) (Penicillium stipitatum).